Consider the following 299-residue polypeptide: tRNA dimethylallyltransferase (299 aa).

13–20 (GPTASGKT) is an ATP binding site. Residue 15–20 (TASGKT) coordinates substrate. The interaction with substrate tRNA stretch occupies residues 38–41 (DSRQ).

It belongs to the IPP transferase family. As to quaternary structure, monomer. The cofactor is Mg(2+).

The enzyme catalyses adenosine(37) in tRNA + dimethylallyl diphosphate = N(6)-dimethylallyladenosine(37) in tRNA + diphosphate. Catalyzes the transfer of a dimethylallyl group onto the adenine at position 37 in tRNAs that read codons beginning with uridine, leading to the formation of N6-(dimethylallyl)adenosine (i(6)A). The polypeptide is tRNA dimethylallyltransferase (Prochlorococcus marinus (strain SARG / CCMP1375 / SS120)).